Consider the following 445-residue polypeptide: Serine--tRNA ligase (445 aa).

229 to 231 (TAE) is a binding site for L-serine. ATP-binding positions include 260-262 (RKE) and Val-276. L-serine is bound at residue Glu-283. 347 to 350 (EVSS) serves as a coordination point for ATP. Ser-383 contributes to the L-serine binding site.

It belongs to the class-II aminoacyl-tRNA synthetase family. Type-1 seryl-tRNA synthetase subfamily. Homodimer. The tRNA molecule binds across the dimer.

It is found in the cytoplasm. The enzyme catalyses tRNA(Ser) + L-serine + ATP = L-seryl-tRNA(Ser) + AMP + diphosphate + H(+). The catalysed reaction is tRNA(Sec) + L-serine + ATP = L-seryl-tRNA(Sec) + AMP + diphosphate + H(+). It functions in the pathway aminoacyl-tRNA biosynthesis; selenocysteinyl-tRNA(Sec) biosynthesis; L-seryl-tRNA(Sec) from L-serine and tRNA(Sec): step 1/1. Catalyzes the attachment of serine to tRNA(Ser). Is also able to aminoacylate tRNA(Sec) with serine, to form the misacylated tRNA L-seryl-tRNA(Sec), which will be further converted into selenocysteinyl-tRNA(Sec). This Thermomicrobium roseum (strain ATCC 27502 / DSM 5159 / P-2) protein is Serine--tRNA ligase.